Reading from the N-terminus, the 211-residue chain is Urease accessory protein UreF (211 aa).

It belongs to the UreF family. As to quaternary structure, ureD, UreF and UreG form a complex that acts as a GTP-hydrolysis-dependent molecular chaperone, activating the urease apoprotein by helping to assemble the nickel containing metallocenter of UreC. The UreE protein probably delivers the nickel.

The protein resides in the cytoplasm. Its function is as follows. Required for maturation of urease via the functional incorporation of the urease nickel metallocenter. The sequence is that of Urease accessory protein UreF from Mycobacterium sp. (strain JLS).